Consider the following 180-residue polypeptide: p-cumate 2,3-dioxygenase system, small oxygenase component (180 aa).

It belongs to the bacterial ring-hydroxylating dioxygenase beta subunit family. The p-cumate 2,3-dioxygenase multicomponent enzyme system is composed of an electron transfer component and a dioxygenase component (iron sulfur protein (ISP)). The electron transfer component is composed of a ferredoxin reductase (CmtAa) and a ferredoxin (CmtAd), and the dioxygenase component is formed of a large alpha subunit (CmtAb) and a small beta subunit (CmtAc).

It participates in aromatic compound metabolism; p-cumate degradation; acetaldehyde and pyruvate from p-cumate. Its function is as follows. Component of the p-cumate 2,3-dioxygenase multicomponent enzyme system which catalyzes the incorporation of both atoms of molecular oxygen into p-cumate to form cis-2,3-dihydroxy-2,3-dihydro-p-cumate. The beta subunit seems to have a structural role in the holoenzyme. Also able to catalyze the cis-dihydroxylation of indole-2-carboxylate and indole-3-carboxylate. This chain is p-cumate 2,3-dioxygenase system, small oxygenase component, found in Pseudomonas putida (Arthrobacter siderocapsulatus).